We begin with the raw amino-acid sequence, 782 residues long: MPGKLRSASKSESEGTEESMETLQKPSEKKTRKEKPKSKTDEATEGVEEAASSKVKAVKKKGPSEDDVGPPKSKKAKKQEEEPQDDPASKSKTSKKKKEPLEKKAPSAKTKEMKAEEPSEEEADAPKPKKTKKGKEANGDVGEKSPGLKNGLSHPKPDSSSTQAPGEESETEKEIPVEQKEGAFSNFPISEETVKLLKARGVNFLFPIQAKTFHHVYSGKDLIAQARTGTGKTFSFAIPLIEKLQGGLQERKRGRAPQVLVLAPTRELANQVSKDFSDITKKLSVACFYGGTPYGGQIERMRSGIDILVGTPGRIKDHLQNGKLDLTKLKHVVLDEVDQMLDMGFADQVEEILCVAYKKDSEDNPQTLLFSATCPHWVFNVAKKYMKSTYEQVDLIGKKTQKAAITVEHLAIKCHWTERAAVIGDVIRVYSGHQGRTIIFCETKKDAQELSQNTCIKQDAQSLHGDIPQKQREITLKGFRNGNFGVLVATNVAARGLDIPEVDLVVQSCPPKDVESYIHRSGRTGRAGRTGVCICFYQHKEEYQLAQVEQKAGIKFKRIGVPSATEIIKASSKDAIRLLDSVPPTAIGHFKQSAEKLIEEKGAVEALAAALAHISGATSVDQRSLINSQAGFVTMILRCSVEMPNISYAWKELKEQLGESIDAKVKGMVFLKGKLGVCFDVRTEAVTEIKEKWHDSRRWQLTVATEQPELEGPPEGYRGGRGQRDGSRGSFRGQRGGSRNFRGQGQRGGSRNFRGQRPGGGNKSNRSPNKGQKRSFSKAFGQ.

Positions 1 to 184 (MPGKLRSASK…IPVEQKEGAF (184 aa)) are disordered. Phosphoserine is present on residues serine 7 and serine 13. Basic and acidic residues-rich tracts occupy residues 26-42 (PSEK…KTDE) and 99-117 (EPLE…KAEE). The residue at position 39 (lysine 39) is an N6-acetyllysine. Residue lysine 114 forms a Glycyl lysine isopeptide (Lys-Gly) (interchain with G-Cter in SUMO1); alternate linkage. Lysine 114 is covalently cross-linked (Glycyl lysine isopeptide (Lys-Gly) (interchain with G-Cter in SUMO2); alternate). Phosphoserine is present on serine 119. Positions 134 to 143 (GKEANGDVGE) are enriched in basic and acidic residues. Position 135 is an N6-acetyllysine (lysine 135). Serine 145 and serine 169 each carry phosphoserine. A compositionally biased stretch (basic and acidic residues) spans 172–181 (EKEIPVEQKE). Positions 182–210 (GAFSNFPISEETVKLLKARGVNFLFPIQA) match the Q motif motif. The Helicase ATP-binding domain maps to 213 to 392 (FHHVYSGKDL…KKYMKSTYEQ (180 aa)). ATP is bound at residue 226 to 233 (ARTGTGKT). Residue threonine 292 is modified to Phosphothreonine. The DEAD box signature appears at 335–338 (DEVD). Residues 425–569 (DVIRVYSGHQ…GVPSATEIIK (145 aa)) form the Helicase C-terminal domain. Serine 563 is subject to Phosphoserine. Lysine 596 carries the N6-acetyllysine modification. Positions 704-782 (ATEQPELEGP…KRSFSKAFGQ (79 aa)) are disordered. Tandem repeats lie at residues 720-724 (GRGQR), 731-735 (FRGQR), and 741-747 (FRGQGQR). The segment at 720–747 (GRGQRDGSRGSFRGQRGGSRNFRGQGQR) is 3 X 5 AA repeats. The segment covering 728 to 756 (RGSFRGQRGGSRNFRGQGQRGGSRNFRGQ) has biased composition (low complexity). At lysine 778 the chain carries N6-acetyllysine.

It belongs to the DEAD box helicase family. DDX21/DDX50 subfamily. Homodimer; homodimerizes via its N-terminus. Found in a multi-helicase-TICAM1 complex at least composed of DHX36, DDX1, DDX21 and TICAM1; this complex exists in resting cells with or without poly(I:C) RNA ligand stimulation. Interacts (via C-terminus) with TICAM1 (via TIR domain). Interacts with DHX36 (via C-terminus); this interaction serves as bridges to TICAM1. Interacts (via C-terminus) with DDX1 (via B30.2/SPRY domain); this interaction serves as bridges to TICAM1. Component of the B-WICH complex, at least composed of SMARCA5/SNF2H, BAZ1B/WSTF, SF3B1, DEK, MYO1C, ERCC6, MYBBP1A and DDX21. Interacts with C1QBP. Interacts with JUN. Interacts with WDR46. Interacts with MCM3AP. Interacts with WDR43. Interacts with KPNA3. Interacts with GID4. Acetylation by CREBBP/CBP inhibits the helicase activity. Deacetylation by SIRT7 promotes the helicase activity and overcomes R-loop-mediated stalling of RNA polymerases.

Its subcellular location is the nucleus. It is found in the nucleolus. The protein resides in the nucleoplasm. The protein localises to the cytoplasm. It localises to the cytosol. Its subcellular location is the mitochondrion. It catalyses the reaction ATP + H2O = ADP + phosphate + H(+). Acetylation inhibits the helicase activity. Functionally, RNA helicase that acts as a sensor of the transcriptional status of both RNA polymerase (Pol) I and II: promotes ribosomal RNA (rRNA) processing and transcription from polymerase II (Pol II). Binds various RNAs, such as rRNAs, snoRNAs, 7SK and, at lower extent, mRNAs. In the nucleolus, localizes to rDNA locus, where it directly binds rRNAs and snoRNAs, and promotes rRNA transcription, processing and modification. Required for rRNA 2'-O-methylation, possibly by promoting the recruitment of late-acting snoRNAs SNORD56 and SNORD58 with pre-ribosomal complexes. In the nucleoplasm, binds 7SK RNA and is recruited to the promoters of Pol II-transcribed genes: acts by facilitating the release of P-TEFb from inhibitory 7SK snRNP in a manner that is dependent on its helicase activity, thereby promoting transcription of its target genes. Functions as a cofactor for JUN-activated transcription: required for phosphorylation of JUN at 'Ser-77'. Can unwind double-stranded RNA (helicase) and can fold or introduce a secondary structure to a single-stranded RNA (foldase). Together with SIRT7, required to prevent R-loop-associated DNA damage and transcription-associated genomic instability: deacetylation by SIRT7 activates the helicase activity, thereby overcoming R-loop-mediated stalling of RNA polymerases. Involved in rRNA processing. May bind to specific miRNA hairpins. Component of a multi-helicase-TICAM1 complex that acts as a cytoplasmic sensor of viral double-stranded RNA (dsRNA) and plays a role in the activation of a cascade of antiviral responses including the induction of pro-inflammatory cytokines via the adapter molecule TICAM1. The chain is Nucleolar RNA helicase 2 (Ddx21) from Rattus norvegicus (Rat).